The sequence spans 31 residues: Dermaseptin-7.2TR (31 aa).

Glu31 is modified (glutamic acid 1-amide).

As to expression, expressed by the skin glands.

It localises to the secreted. Its function is as follows. Has antimicrobial activity. The protein is Dermaseptin-7.2TR of Phyllomedusa trinitatis (Trinidad leaf frog).